The primary structure comprises 262 residues: Phosphatidylserine decarboxylase proenzyme (262 aa).

Active-site charge relay system; for autoendoproteolytic cleavage activity residues include Asp-86, His-142, and Ser-226. Ser-226 functions as the Schiff-base intermediate with substrate; via pyruvic acid; for decarboxylase activity in the catalytic mechanism. Ser-226 bears the Pyruvic acid (Ser); by autocatalysis mark.

It belongs to the phosphatidylserine decarboxylase family. PSD-B subfamily. Prokaryotic type I sub-subfamily. As to quaternary structure, heterodimer of a large membrane-associated beta subunit and a small pyruvoyl-containing alpha subunit. Pyruvate is required as a cofactor. Is synthesized initially as an inactive proenzyme. Formation of the active enzyme involves a self-maturation process in which the active site pyruvoyl group is generated from an internal serine residue via an autocatalytic post-translational modification. Two non-identical subunits are generated from the proenzyme in this reaction, and the pyruvate is formed at the N-terminus of the alpha chain, which is derived from the carboxyl end of the proenzyme. The autoendoproteolytic cleavage occurs by a canonical serine protease mechanism, in which the side chain hydroxyl group of the serine supplies its oxygen atom to form the C-terminus of the beta chain, while the remainder of the serine residue undergoes an oxidative deamination to produce ammonia and the pyruvoyl prosthetic group on the alpha chain. During this reaction, the Ser that is part of the protease active site of the proenzyme becomes the pyruvoyl prosthetic group, which constitutes an essential element of the active site of the mature decarboxylase.

The protein resides in the cell membrane. It catalyses the reaction a 1,2-diacyl-sn-glycero-3-phospho-L-serine + H(+) = a 1,2-diacyl-sn-glycero-3-phosphoethanolamine + CO2. The protein operates within phospholipid metabolism; phosphatidylethanolamine biosynthesis; phosphatidylethanolamine from CDP-diacylglycerol: step 2/2. In terms of biological role, catalyzes the formation of phosphatidylethanolamine (PtdEtn) from phosphatidylserine (PtdSer). This is Phosphatidylserine decarboxylase proenzyme from Bacillus thuringiensis subsp. konkukian (strain 97-27).